We begin with the raw amino-acid sequence, 1017 residues long: Ubiquitin-like modifier-activating enzyme 1 (1017 aa).

A run of 2 repeats spans residues 26-163 and 419-571. The segment at 26 to 571 is 2 approximate repeats; that stretch reads SHETMKKITS…GTKGNTQVVV (546 aa). Residues alanine 438, aspartate 464, arginine 475, lysine 488, and 536 to 537 contribute to the ATP site; that span reads DN. The active-site Glycyl thioester intermediate is the cysteine 592. The segment covering 765-781 has biased composition (polar residues); sequence IQTSENEPAPSSNTQQA. A disordered region spans residues 765–788; the sequence is IQTSENEPAPSSNTQQAGGDAEDD.

Belongs to the ubiquitin-activating E1 family. As to quaternary structure, monomer.

The catalysed reaction is ATP + ubiquitin + [E1 ubiquitin-activating enzyme]-L-cysteine = AMP + diphosphate + S-ubiquitinyl-[E1 ubiquitin-activating enzyme]-L-cysteine.. It participates in protein modification; protein ubiquitination. Functionally, catalyzes the first step in ubiquitin conjugation to mark cellular proteins for degradation through the ubiquitin-proteasome system. Activates ubiquitin by first adenylating its C-terminal glycine residue with ATP, and thereafter linking this residue to the side chain of a cysteine residue in E1, yielding a ubiquitin-E1 thioester and free AMP. The sequence is that of Ubiquitin-like modifier-activating enzyme 1 (uba1) from Dictyostelium discoideum (Social amoeba).